A 421-amino-acid polypeptide reads, in one-letter code: Adenylosuccinate synthetase (421 aa).

GTP contacts are provided by residues 11–17 (GDEGKGK) and 39–41 (GHT). Asp12 (proton acceptor) is an active-site residue. Asp12 and Gly39 together coordinate Mg(2+). IMP is bound by residues 12–15 (DEGK), 37–40 (NAGH), Thr124, Arg138, Gln220, Thr235, and Arg299. The Proton donor role is filled by His40. Residue 295 to 301 (TTTGRPR) participates in substrate binding. GTP is bound by residues Arg301, 327–329 (KLD), and 409–411 (SVG).

It belongs to the adenylosuccinate synthetase family. In terms of assembly, homodimer. The cofactor is Mg(2+).

Its subcellular location is the cytoplasm. It carries out the reaction IMP + L-aspartate + GTP = N(6)-(1,2-dicarboxyethyl)-AMP + GDP + phosphate + 2 H(+). Its pathway is purine metabolism; AMP biosynthesis via de novo pathway; AMP from IMP: step 1/2. Functionally, plays an important role in the de novo pathway of purine nucleotide biosynthesis. Catalyzes the first committed step in the biosynthesis of AMP from IMP. The polypeptide is Adenylosuccinate synthetase (Methanothrix thermoacetophila (strain DSM 6194 / JCM 14653 / NBRC 101360 / PT) (Methanosaeta thermophila)).